Consider the following 513-residue polypeptide: ATP synthase subunit alpha (513 aa).

169–176 lines the ATP pocket; that stretch reads GDRQTGKT.

This sequence belongs to the ATPase alpha/beta chains family. As to quaternary structure, F-type ATPases have 2 components, CF(1) - the catalytic core - and CF(0) - the membrane proton channel. CF(1) has five subunits: alpha(3), beta(3), gamma(1), delta(1), epsilon(1). CF(0) has three main subunits: a(1), b(2) and c(9-12). The alpha and beta chains form an alternating ring which encloses part of the gamma chain. CF(1) is attached to CF(0) by a central stalk formed by the gamma and epsilon chains, while a peripheral stalk is formed by the delta and b chains.

It localises to the cell inner membrane. It carries out the reaction ATP + H2O + 4 H(+)(in) = ADP + phosphate + 5 H(+)(out). Produces ATP from ADP in the presence of a proton gradient across the membrane. The alpha chain is a regulatory subunit. This is ATP synthase subunit alpha from Bordetella petrii (strain ATCC BAA-461 / DSM 12804 / CCUG 43448).